Consider the following 273-residue polypeptide: MALKNFNPITPSLRELVQVDKTNLWKGRPLKSLTKGMSKTGGRNQQGRITSWHRGGGHKKLYRVIDFKRKKIDIFAVVERIEYDPNRTAFIALIKYDDGEYSYILAPQKLSIGDRVISSQAADIKIGNCLPLKSIPIGTTLHNVEMKVGKGGQIARSAGTSVELVGKDSGYAQIKLRSGEFRLVPLDCKATIGSISNPDQKNINLGKAGRNRWLGWRPHVRGVAMNPIDHPHGGGEGKTSGGRHPVTPWGFSTKGKKTRKNKRTSKFIVKKRK.

The segment at 228–273 is disordered; the sequence is IDHPHGGGEGKTSGGRHPVTPWGFSTKGKKTRKNKRTSKFIVKKRK. Residues 254–273 are compositionally biased toward basic residues; sequence KGKKTRKNKRTSKFIVKKRK.

Belongs to the universal ribosomal protein uL2 family. Part of the 50S ribosomal subunit. Forms a bridge to the 30S subunit in the 70S ribosome.

One of the primary rRNA binding proteins. Required for association of the 30S and 50S subunits to form the 70S ribosome, for tRNA binding and peptide bond formation. It has been suggested to have peptidyltransferase activity; this is somewhat controversial. Makes several contacts with the 16S rRNA in the 70S ribosome. This chain is Large ribosomal subunit protein uL2, found in Rickettsia typhi (strain ATCC VR-144 / Wilmington).